The sequence spans 93 residues: MQQEALGMVETKGLTAAIEAADAMVKSANVMLVGYEKIGSGLVTVIVRGDVGAVKAATDAGAAAARNVGEVKAVHVIPRPHTDVEKILPKGIS.

Positions 5–89 constitute a BMC domain; sequence ALGMVETKGL…PHTDVEKILP (85 aa).

This sequence belongs to the bacterial microcompartments protein family. In terms of assembly, homohexamer with a central pore; Lys-26 and Arg-79 interactions are very important for hexamer symmetry. The hexamers pack against each other in arrays. Interacts individually with shell proteins PduB, PduB', PduJ, PduK, PduN and PduU. Modeling suggests PduC, PduD, PduE, PduL and PduP interact with a cleft formed by the C-terminal segments of 2 adjacent PduA subunits (on the BMC luminal side) in the hexamer.

Its subcellular location is the bacterial microcompartment. It participates in polyol metabolism; 1,2-propanediol degradation. Its function is as follows. One of the major shell proteins of the bacterial microcompartment (BMC) dedicated to 1,2-propanediol (1,2-PD) degradation, probably important for metabolite diffusion into and out of the BMC. Overexpression of a C-terminally mutated form (PduA*) makes thin parallel filaments with a honeycomb-like assembly in cross-section that probably form nanotubes. The filaments interfere with septation. PduA is probably the hub for binding multiple enzymes to the interior of the BMC. At least one of PduA or PduJ is required for BMC assembly; it must be encoded as the first gene in the pdu operon. Functionally, expression of a cosmid containing the full 21-gene pdu operon in E.coli allows E.coli to grow on 1,2-PD with the appearance of BMCs in its cytoplasm. Overexpression of this protein leads to aberrant intracellular filaments. The 1,2-PD-specific bacterial microcompartment (BMC) concentrates low levels of 1,2-PD catabolic enzymes, concentrates volatile reaction intermediates thus enhancing pathway flux and keeps the level of toxic, mutagenic propionaldehyde low. This Citrobacter freundii protein is Bacterial microcompartment shell protein PduA.